We begin with the raw amino-acid sequence, 615 residues long: Hypermethylated in cancer 2 protein (615 aa).

The BTB domain occupies 46–109 (CDVIIMVENS…IYTGKLLPSD (64 aa)). A disordered region spans residues 144–167 (KPFGSGRAGSTGMGRPPRSQRLST). Residues serine 166, serine 169, and serine 197 each carry the phosphoserine modification. Disordered regions lie at residues 182-208 (RKGA…GSNQ) and 229-421 (GCSS…SGHA). Residues 246 to 250 (GLDLS) are binding to CtBP. The segment covering 280–296 (SPPAASAPPVANSASYS) has biased composition (low complexity). The span at 336 to 356 (KKEWGKKEPVAGSPFERREAG) shows a compositional bias: basic and acidic residues. Serine 348 is modified (phosphoserine). Low complexity predominate over residues 379 to 388 (ASGAGPSGPY). Residue serine 412 is modified to Phosphoserine. C2H2-type zinc fingers lie at residues 442 to 469 (YVCI…EEEL), 505 to 532 (FKCS…LTRP), 533 to 560 (FPCN…GLKP), 561 to 588 (FACD…GEKP), and 589 to 615 (YECQ…TSPS).

Belongs to the krueppel C2H2-type zinc-finger protein family. Hic subfamily. Self-associates. Interacts with HIC1. As to expression, highest levels in cerebellum.

It is found in the nucleus. In terms of biological role, transcriptional repressor. The sequence is that of Hypermethylated in cancer 2 protein (HIC2) from Homo sapiens (Human).